We begin with the raw amino-acid sequence, 136 residues long: Basic phospholipase A2 Tgc-K49 (136 aa).

Residues 1 to 15 (MRTLWIVAVLLVGEG) form the signal peptide. 7 disulfide bridges follow: Cys41-Cys130, Cys43-Cys59, Cys58-Cys110, Cys64-Cys136, Cys65-Cys103, Cys72-Cys96, and Cys90-Cys101. His62 is a catalytic residue. The active site involves Asp104.

It belongs to the phospholipase A2 family. Group II subfamily. K49 sub-subfamily. In terms of tissue distribution, expressed by the venom gland.

It is found in the secreted. The catalysed reaction is a 1,2-diacyl-sn-glycero-3-phosphocholine + H2O = a 1-acyl-sn-glycero-3-phosphocholine + a fatty acid + H(+). PLA2 catalyzes the calcium-dependent hydrolysis of the 2-acyl groups in 3-sn-phosphoglycerides. The protein is Basic phospholipase A2 Tgc-K49 of Trimeresurus gracilis (Kikuchi habu).